The sequence spans 430 residues: MGLHNPLPSSLKSECKKAGKILTSFVDPRQTLGAQEVIPPSVLTNAKGLVIMTVLKAGFLFSGRIGSGLIVARLDDGTWSAPSAVMTGGMGVGAQIGSELTDFVIILNSKAAVQTFARLGSITLGGNLSIAAGPLGRNAEAGGGASVGGMAPMFSYSKTKGLFAGVSLEGSVLVERRDANRSLYRGDITAKRLLSGQVAQPAAADPLYRVLNSKIFNLNRGDEGDIYNDVPIYADDEPEDIWGPSSKSTKRRDSADRSSSYSRRGDSYRSNRSRAHDDDDEDDYSFSRSKSLSRKTAGGSLRSSKMDNRRSKYADTPSPRRSRSYSDEDEESVYSSDVSTESSSQFSSRSSEYSKPSRPTAPKPKFKQDSLGPNQARAMYSFAGEQPGDLSFQKGDIIDIVERSGSHDDWWTGRIGYREGIFPANYVKLS.

The tract at residues 237-372 (EPEDIWGPSS…KPKFKQDSLG (136 aa)) is disordered. Residues 263–277 (RRGDSYRSNRSRAHD) show a composition bias toward basic and acidic residues. The residue at position 285 (S285) is a Phosphoserine. The span at 304-313 (SKMDNRRSKY) shows a compositional bias: basic and acidic residues. T316 is modified (phosphothreonine). Residues S318 and S324 each carry the phosphoserine modification. Y325 is subject to Phosphotyrosine. Phosphoserine is present on residues S326, S354, and S406. Positions 333-358 (VYSSDVSTESSSQFSSRSSEYSKPSR) are enriched in low complexity. The SH3 domain occupies 371–430 (LGPNQARAMYSFAGEQPGDLSFQKGDIIDIVERSGSHDDWWTGRIGYREGIFPANYVKLS).

This sequence belongs to the SH3YL1 family.

This chain is SH3 domain-containing protein PJ696.02, found in Schizosaccharomyces pombe (strain 972 / ATCC 24843) (Fission yeast).